Consider the following 132-residue polypeptide: Small ribosomal subunit protein uS11 (132 aa).

Belongs to the universal ribosomal protein uS11 family. In terms of assembly, part of the 30S ribosomal subunit. Interacts with proteins S7 and S18. Binds to IF-3.

Functionally, located on the platform of the 30S subunit, it bridges several disparate RNA helices of the 16S rRNA. Forms part of the Shine-Dalgarno cleft in the 70S ribosome. The polypeptide is Small ribosomal subunit protein uS11 (Bifidobacterium animalis subsp. lactis (strain AD011)).